The following is a 235-amino-acid chain: Methylosome subunit pICln (235 aa).

Positions 1 to 21 (MSFLKSFPPPGSAEGLRQQQP) are disordered. Ser2 is modified (N-acetylserine). Residues Ser100, Ser142, Ser191, Ser193, Ser196, and Ser208 each carry the phosphoserine modification. Residues 133–157 (LHPDPEDEDSDDYDGEEYDVEAHEQ) are disordered. Acidic residues predominate over residues 137-151 (PEDEDSDDYDGEEYD). Residues 195–217 (SSQYNMAGVRTEDSTRDYEDGME) form a disordered region. The span at 204 to 213 (RTEDSTRDYE) shows a compositional bias: basic and acidic residues. Residue Thr221 is modified to Phosphothreonine.

The protein belongs to the pICln (TC 1.A.47) family. As to quaternary structure, component of the methylosome, a 20S complex containing at least PRMT5/SKB1, WDR77/MEP50 and CLNS1A/pICln. May mediate SNRPD1 and SNRPD3 methylation. Forms a 6S pICln-Sm complex composed of CLNS1A/pICln, SNRPD1, SNRPD2, SNRPE, SNRPF and SNRPG; ring-like structure where CLNS1A/pICln mimics additional Sm proteins and which is unable to assemble into the core snRNP. Interacts with LSM10 and LSM11.

The protein localises to the cytoplasm. It localises to the cytosol. The protein resides in the nucleus. Its subcellular location is the cytoskeleton. Its function is as follows. Involved in both the assembly of spliceosomal snRNPs and the methylation of Sm proteins. Chaperone that regulates the assembly of spliceosomal U1, U2, U4 and U5 small nuclear ribonucleoproteins (snRNPs), the building blocks of the spliceosome, and thereby plays an important role in the splicing of cellular pre-mRNAs. Most spliceosomal snRNPs contain a common set of Sm proteins SNRPB, SNRPD1, SNRPD2, SNRPD3, SNRPE, SNRPF and SNRPG that assemble in a heptameric protein ring on the Sm site of the small nuclear RNA to form the core snRNP (Sm core). In the cytosol, the Sm proteins SNRPD1, SNRPD2, SNRPE, SNRPF and SNRPG are trapped in an inactive 6S pICln-Sm complex by the chaperone CLNS1A that controls the assembly of the core snRNP. Dissociation by the SMN complex of CLNS1A from the trapped Sm proteins and their transfer to an SMN-Sm complex triggers the assembly of core snRNPs and their transport to the nucleus. The polypeptide is Methylosome subunit pICln (CLNS1A) (Canis lupus familiaris (Dog)).